The sequence spans 81 residues: Cytochrome b559 subunit alpha (81 aa).

Residues 21–35 (VIHSITIPMLFVAGW) traverse the membrane as a helical segment. His23 contributes to the heme binding site.

Belongs to the PsbE/PsbF family. In terms of assembly, heterodimer of an alpha subunit and a beta subunit. PSII is composed of 1 copy each of membrane proteins PsbA, PsbB, PsbC, PsbD, PsbE, PsbF, PsbH, PsbI, PsbJ, PsbK, PsbL, PsbM, PsbT, PsbX, PsbY, PsbZ, Psb30/Ycf12, peripheral proteins PsbO, CyanoQ (PsbQ), PsbU, PsbV and a large number of cofactors. It forms dimeric complexes. The cofactor is heme b.

The protein localises to the cellular thylakoid membrane. Its function is as follows. This b-type cytochrome is tightly associated with the reaction center of photosystem II (PSII). PSII is a light-driven water:plastoquinone oxidoreductase that uses light energy to abstract electrons from H(2)O, generating O(2) and a proton gradient subsequently used for ATP formation. It consists of a core antenna complex that captures photons, and an electron transfer chain that converts photonic excitation into a charge separation. The sequence is that of Cytochrome b559 subunit alpha from Gloeothece citriformis (strain PCC 7424) (Cyanothece sp. (strain PCC 7424)).